Here is a 400-residue protein sequence, read N- to C-terminus: U-box domain-containing protein 37 (400 aa).

The stretch at 229–298 (KEWESAYLEE…RKAKEERDLL (70 aa)) forms a coiled coil. The 75-residue stretch at 324–398 (EAPQYFICPI…QEWLHASSSF (75 aa)) folds into the U-box domain.

The enzyme catalyses S-ubiquitinyl-[E2 ubiquitin-conjugating enzyme]-L-cysteine + [acceptor protein]-L-lysine = [E2 ubiquitin-conjugating enzyme]-L-cysteine + N(6)-ubiquitinyl-[acceptor protein]-L-lysine.. Its pathway is protein modification; protein ubiquitination. Functions as an E3 ubiquitin ligase. In Arabidopsis thaliana (Mouse-ear cress), this protein is U-box domain-containing protein 37 (PUB37).